The chain runs to 697 residues: uncharacterized protein (697 aa).

Positions 24–51 form a DNA-binding region, zn(2)-C6 fungal-type; the sequence is CIRCRQKKIKCSGEKPSCQACSNNKVEC. Residues 500–520 traverse the membrane as a helical segment; the sequence is YIMSPFVGFSILTAATIHMLL.

It localises to the nucleus membrane. This is an uncharacterized protein from Schizosaccharomyces pombe (strain 972 / ATCC 24843) (Fission yeast).